The primary structure comprises 138 residues: Membrane protein P8A7 (138 aa).

4 helical membrane-spanning segments follow: residues 12 to 30 (ILVI…YLFV), 32 to 56 (GLFH…IVLL), 71 to 90 (YTYW…LILG), and 93 to 118 (GFFL…LLGC).

The protein resides in the membrane. This chain is Membrane protein P8A7 (pmpA), found in Dictyostelium discoideum (Social amoeba).